Consider the following 477-residue polypeptide: Dihydrolipoyl dehydrogenase 3 (477 aa).

Residues 39 to 47 (EKGEYGGAC), lysine 56, and alanine 118 each bind FAD. An intrachain disulfide couples cysteine 47 to cysteine 52. Residues 186 to 190 (GAGYI), glutamate 209, and 279 to 282 (AVGR) contribute to the NAD(+) site. The FAD site is built by aspartate 322 and alanine 330. Histidine 454 (proton acceptor) is an active-site residue.

It belongs to the class-I pyridine nucleotide-disulfide oxidoreductase family. As to quaternary structure, homodimer. FAD is required as a cofactor.

The protein resides in the cytoplasm. It catalyses the reaction N(6)-[(R)-dihydrolipoyl]-L-lysyl-[protein] + NAD(+) = N(6)-[(R)-lipoyl]-L-lysyl-[protein] + NADH + H(+). The polypeptide is Dihydrolipoyl dehydrogenase 3 (lpdA3) (Haloarcula marismortui (strain ATCC 43049 / DSM 3752 / JCM 8966 / VKM B-1809) (Halobacterium marismortui)).